The chain runs to 362 residues: Ribosomal RNA large subunit methyltransferase M (362 aa).

Residues serine 187, 220–223 (CPGG), aspartate 239, aspartate 259, and aspartate 276 contribute to the S-adenosyl-L-methionine site. Residue lysine 305 is the Proton acceptor of the active site.

Belongs to the class I-like SAM-binding methyltransferase superfamily. RNA methyltransferase RlmE family. RlmM subfamily. As to quaternary structure, monomer.

Its subcellular location is the cytoplasm. The enzyme catalyses cytidine(2498) in 23S rRNA + S-adenosyl-L-methionine = 2'-O-methylcytidine(2498) in 23S rRNA + S-adenosyl-L-homocysteine + H(+). Catalyzes the 2'-O-methylation at nucleotide C2498 in 23S rRNA. The polypeptide is Ribosomal RNA large subunit methyltransferase M (Shewanella frigidimarina (strain NCIMB 400)).